The primary structure comprises 383 residues: Cell division protein FtsZ (383 aa).

GTP is bound by residues 20-24 (GGGGN), 107-109 (GTG), Glu-138, Arg-142, and Asn-186.

The protein belongs to the FtsZ family. In terms of assembly, homodimer. Polymerizes to form a dynamic ring structure in a strictly GTP-dependent manner. Interacts directly with several other division proteins.

The protein localises to the cytoplasm. Functionally, essential cell division protein that forms a contractile ring structure (Z ring) at the future cell division site. The regulation of the ring assembly controls the timing and the location of cell division. One of the functions of the FtsZ ring is to recruit other cell division proteins to the septum to produce a new cell wall between the dividing cells. Binds GTP and shows GTPase activity. The polypeptide is Cell division protein FtsZ (Shigella flexneri).